The primary structure comprises 987 residues: UPF0182 protein Lxx09300 (987 aa).

Transmembrane regions (helical) follow at residues 17–37 (VWTTLGVIVALVILFFIFAGL), 59–79 (AAIAMFFVGFLGMALPLWVVI), 108–128 (RLAMYGIPIVFGIFAGVSAAS), 167–187 (VGFASAVVLISLLATLATCYL), 206–226 (VQISVIAAVYLLLQGVSVWLD), 256–276 (AVLAVAAVFVALLFAVTAFTG), and 283–303 (VGTALLIVAALVIGAIYPWAI). 2 disordered regions span residues 700 to 719 (RDDAWTTPNDPTSSPTDPTL) and 886 to 947 (TAGD…ALQQ). The segment covering 705 to 719 (TTPNDPTSSPTDPTL) has biased composition (low complexity). The span at 897-932 (GGSGGGSSGDAGSSAGGGSSGGGGSSAGGSSSGSGS) shows a compositional bias: gly residues. Residues 933–947 (SGTQSNAALQRALQQ) are compositionally biased toward low complexity.

It belongs to the UPF0182 family.

The protein localises to the cell membrane. This chain is UPF0182 protein Lxx09300, found in Leifsonia xyli subsp. xyli (strain CTCB07).